A 105-amino-acid chain; its full sequence is uncharacterized protein (105 aa).

The segment covering 31-47 (SVNLPSPSVKPSVTPSV) has biased composition (low complexity). The tract at residues 31–80 (SVNLPSPSVKPSVTPSVKKPPHVIRSDYSKPREKPAKVAKKPTVKNDKKP) is disordered. A compositionally biased stretch (basic and acidic residues) spans 54–66 (IRSDYSKPREKPA).

This is an uncharacterized protein from Caenorhabditis elegans.